Reading from the N-terminus, the 881-residue chain is Probable alpha/beta-glucosidase agdC (881 aa).

The signal sequence occupies residues 1 to 14 (MLRSLLLLAPLVGA). Residues asparagine 171, asparagine 293, and asparagine 373 are each glycosylated (N-linked (GlcNAc...) asparagine). Catalysis depends on aspartate 422, which acts as the Nucleophile. Glutamate 425 is a catalytic residue. A disordered region spans residues 440-485 (YARDNDLPPAAPPVRPSNPRPLPGFPGDFQPSSSSKRSTKGSKVGL). Over residues 448 to 463 (PAAPPVRPSNPRPLPG) the composition is skewed to pro residues. The N-linked (GlcNAc...) asparagine glycan is linked to asparagine 506. Aspartate 571 serves as the catalytic Proton donor. N-linked (GlcNAc...) asparagine glycosylation is found at asparagine 572, asparagine 608, and asparagine 742.

It belongs to the glycosyl hydrolase 31 family.

It localises to the secreted. The enzyme catalyses Hydrolysis of terminal, non-reducing (1-&gt;4)-linked alpha-D-glucose residues with release of alpha-D-glucose.. The catalysed reaction is Hydrolysis of terminal, non-reducing beta-D-glucosyl residues with release of beta-D-glucose.. In terms of biological role, glucosidase involved in the degradation of cellulosic biomass. Has both alpha- and beta-glucosidase activity. In Aspergillus fumigatus (strain CBS 144.89 / FGSC A1163 / CEA10) (Neosartorya fumigata), this protein is Probable alpha/beta-glucosidase agdC (agdC).